A 485-amino-acid chain; its full sequence is Adenosylhomocysteinase (485 aa).

The substrate site is built by T64, D139, and E205. NAD(+) is bound at residue T206–T208. Substrate contacts are provided by K235 and D239. NAD(+)-binding positions include N240, G269 to G274, E292, N327, I348 to H350, and N397.

It belongs to the adenosylhomocysteinase family. NAD(+) is required as a cofactor.

It carries out the reaction S-adenosyl-L-homocysteine + H2O = L-homocysteine + adenosine. Its pathway is amino-acid biosynthesis; L-homocysteine biosynthesis; L-homocysteine from S-adenosyl-L-homocysteine: step 1/1. Functionally, adenosylhomocysteine is a competitive inhibitor of S-adenosyl-L-methionine-dependent methyl transferase reactions; therefore adenosylhomocysteinase may play a key role in the control of methylations via regulation of the intracellular concentration of adenosylhomocysteine. This chain is Adenosylhomocysteinase (SAHH), found in Lupinus luteus (European yellow lupine).